The sequence spans 341 residues: Retinol dehydrogenase 10 (341 aa).

A helical; Signal-anchor membrane pass occupies residues 3–23 (IVVEFFLVTFKVLWAFVLAAA). NADP(+) is bound at residue 40–64 (LITGAGSGLGRLFALEFARRRALLV). Residue Ser197 participates in substrate binding. The active-site Proton acceptor is Tyr210.

The protein belongs to the short-chain dehydrogenases/reductases (SDR) family. As to expression, detected in retina, entire eyecups and in liver (at protein level).

It is found in the microsome membrane. It localises to the endoplasmic reticulum membrane. It catalyses the reaction all-trans-retinol + NADP(+) = all-trans-retinal + NADPH + H(+). It functions in the pathway cofactor metabolism; retinol metabolism. Its function is as follows. Retinol dehydrogenase with a clear preference for NADP. Converts all-trans-retinol to all-trans-retinal. The polypeptide is Retinol dehydrogenase 10 (Rdh10) (Rattus norvegicus (Rat)).